Consider the following 224-residue polypeptide: Cytidylate kinase (224 aa).

An ATP-binding site is contributed by 11 to 19 (GPAAAGKST).

The protein belongs to the cytidylate kinase family. Type 1 subfamily.

The protein localises to the cytoplasm. It carries out the reaction CMP + ATP = CDP + ADP. The enzyme catalyses dCMP + ATP = dCDP + ADP. The chain is Cytidylate kinase from Geobacillus kaustophilus (strain HTA426).